The following is a 198-amino-acid chain: N-acetyltransferase 9-like protein (198 aa).

The N-acetyltransferase domain occupies I14–D186.

The protein belongs to the acetyltransferase family. GNAT subfamily.

This is N-acetyltransferase 9-like protein (nat9) from Nematostella vectensis (Starlet sea anemone).